We begin with the raw amino-acid sequence, 230 residues long: Large ribosomal subunit protein uL1 (230 aa).

Belongs to the universal ribosomal protein uL1 family. Part of the 50S ribosomal subunit.

Functionally, binds directly to 23S rRNA. The L1 stalk is quite mobile in the ribosome, and is involved in E site tRNA release. Its function is as follows. Protein L1 is also a translational repressor protein, it controls the translation of the L11 operon by binding to its mRNA. This chain is Large ribosomal subunit protein uL1, found in Thermoanaerobacter sp. (strain X514).